The chain runs to 897 residues: Putative POM121-like protein 1-like (897 aa).

Positions 1–19 (MPEQDKDPRVQENPDDQRT) are enriched in basic and acidic residues. Disordered stretches follow at residues 1-177 (MPEQ…LPPP), 211-252 (IPDC…PKSQ), 266-302 (EVPS…RDTA), 315-348 (ASRD…GSLL), 362-469 (ATAA…ASRP), 484-522 (DCRP…RPKS), 536-612 (AEVP…LPPS), 642-741 (AQRS…ASRP), 753-793 (AISD…DRPK), and 812-856 (STAP…APFT). A compositionally biased stretch (polar residues) spans 54-65 (LHAQSSEIRYNH). A compositionally biased stretch (low complexity) spans 66 to 76 (TSQTSWTSSST). Composition is skewed to polar residues over residues 77–89 (KRNA…SSTG), 103–114 (SRCQLTLSYSKT), and 219–228 (PSHTLSSLAT). 4 stretches are compositionally biased toward polar residues: residues 376 to 385 (NQRSQTSRTR), 417 to 430 (SHCQ…NTVS), 490 to 499 (PSHTLSSLAT), and 556 to 579 (FSSS…TSLI). Residues 599-612 (TSAPAAAAAALPPS) are compositionally biased toward low complexity. 4 stretches are compositionally biased toward polar residues: residues 650-676 (NQRS…STEG), 689-702 (SHCQ…NTVS), 762-771 (PSHTLSSLAT), and 828-849 (FSSS…QDTS). Residues 877 to 897 (LGLFLLVFSFFFLLTWASFSF) traverse the membrane as a helical segment.

The protein belongs to the POM121 family.

It localises to the membrane. The polypeptide is Putative POM121-like protein 1-like (Homo sapiens (Human)).